A 118-amino-acid chain; its full sequence is Large ribosomal subunit protein bL19 (118 aa).

The protein belongs to the bacterial ribosomal protein bL19 family.

This protein is located at the 30S-50S ribosomal subunit interface and may play a role in the structure and function of the aminoacyl-tRNA binding site. In Marinobacter nauticus (strain ATCC 700491 / DSM 11845 / VT8) (Marinobacter aquaeolei), this protein is Large ribosomal subunit protein bL19.